The chain runs to 423 residues: UPF0597 protein Emin_0811 (423 aa).

It belongs to the UPF0597 family.

The sequence is that of UPF0597 protein Emin_0811 from Elusimicrobium minutum (strain Pei191).